A 363-amino-acid polypeptide reads, in one-letter code: Phosphoserine aminotransferase (363 aa).

An L-glutamate-binding site is contributed by Arg-42. Pyridoxal 5'-phosphate is bound by residues Gly-76–Arg-77, Trp-102, Thr-156, Asp-175, and Gln-198. Lys-199 bears the N6-(pyridoxal phosphate)lysine mark. Asn-240–Thr-241 provides a ligand contact to pyridoxal 5'-phosphate.

It belongs to the class-V pyridoxal-phosphate-dependent aminotransferase family. SerC subfamily. As to quaternary structure, homodimer. Pyridoxal 5'-phosphate serves as cofactor.

It is found in the cytoplasm. The enzyme catalyses O-phospho-L-serine + 2-oxoglutarate = 3-phosphooxypyruvate + L-glutamate. It catalyses the reaction 4-(phosphooxy)-L-threonine + 2-oxoglutarate = (R)-3-hydroxy-2-oxo-4-phosphooxybutanoate + L-glutamate. It participates in amino-acid biosynthesis; L-serine biosynthesis; L-serine from 3-phospho-D-glycerate: step 2/3. Its pathway is cofactor biosynthesis; pyridoxine 5'-phosphate biosynthesis; pyridoxine 5'-phosphate from D-erythrose 4-phosphate: step 3/5. In terms of biological role, catalyzes the reversible conversion of 3-phosphohydroxypyruvate to phosphoserine and of 3-hydroxy-2-oxo-4-phosphonooxybutanoate to phosphohydroxythreonine. This is Phosphoserine aminotransferase from Shewanella baltica (strain OS155 / ATCC BAA-1091).